The sequence spans 248 residues: Triosephosphate isomerase (248 aa).

Lys-12 lines the substrate pocket. The active-site Electrophile is the His-94. Glu-165 functions as the Proton acceptor in the catalytic mechanism.

Belongs to the triosephosphate isomerase family. In terms of assembly, homodimer.

The enzyme catalyses D-glyceraldehyde 3-phosphate = dihydroxyacetone phosphate. It participates in carbohydrate biosynthesis; gluconeogenesis. It functions in the pathway carbohydrate degradation; glycolysis; D-glyceraldehyde 3-phosphate from glycerone phosphate: step 1/1. The sequence is that of Triosephosphate isomerase (Tpi) from Bombyx mori (Silk moth).